The sequence spans 71 residues: Large ribosomal subunit protein bL31 (71 aa).

4 residues coordinate Zn(2+): cysteine 16, cysteine 18, cysteine 38, and cysteine 41.

This sequence belongs to the bacterial ribosomal protein bL31 family. Type A subfamily. Part of the 50S ribosomal subunit. Requires Zn(2+) as cofactor.

Functionally, binds the 23S rRNA. The sequence is that of Large ribosomal subunit protein bL31 from Neisseria gonorrhoeae (strain ATCC 700825 / FA 1090).